A 93-amino-acid chain; its full sequence is Small ribosomal subunit protein uS19 (93 aa).

The protein belongs to the universal ribosomal protein uS19 family.

Protein S19 forms a complex with S13 that binds strongly to the 16S ribosomal RNA. The sequence is that of Small ribosomal subunit protein uS19 from Limosilactobacillus fermentum (strain NBRC 3956 / LMG 18251) (Lactobacillus fermentum).